Here is a 351-residue protein sequence, read N- to C-terminus: Cardiolipin synthase (CMP-forming) (351 aa).

Positions 74–120 (PAPQLSASHQHQAQQQQQQTKQPQQPYDPQQDQVPSTSTASSSKPAA) are disordered. Over residues 76–120 (PQLSASHQHQAQQQQQQTKQPQQPYDPQQDQVPSTSTASSSKPAA) the composition is skewed to low complexity. 5 helical membrane-spanning segments follow: residues 139-159 (PLIG…ALAV), 191-211 (VLIG…GWVA), 251-271 (AAAA…GGGG), 280-300 (PLLI…GYLL), and 321-341 (LIMG…LAYG).

It belongs to the CDP-alcohol phosphatidyltransferase class-I family. Mn(2+) is required as a cofactor.

Its subcellular location is the mitochondrion inner membrane. The catalysed reaction is a CDP-1,2-diacyl-sn-glycerol + a 1,2-diacyl-sn-glycero-3-phospho-(1'-sn-glycerol) = a cardiolipin + CMP + H(+). In terms of biological role, catalyzes the synthesis of cardiolipin (CL) (diphosphatidylglycerol) by specifically transferring a phosphatidyl group from CDP-diacylglycerol to phosphatidylglycerol (PG). CL is a key phospholipid in mitochondrial membranes and plays important roles in maintaining the functional integrity and dynamics of mitochondria under both optimal and stress conditions. Cannot catalyze the phosphatidyl group transfer from one PG molecule to another to form CL. The sequence is that of Cardiolipin synthase (CMP-forming) from Chlamydomonas reinhardtii (Chlamydomonas smithii).